We begin with the raw amino-acid sequence, 80 residues long: UPF0270 protein VFMJ11_0205 (80 aa).

It belongs to the UPF0270 family.

The polypeptide is UPF0270 protein VFMJ11_0205 (Aliivibrio fischeri (strain MJ11) (Vibrio fischeri)).